The following is a 241-amino-acid chain: MPKYEIMTILDPKAEMAIIDNLLKTVFGDNSTEKLRKLETTNLAYSIRKSKIAQYFLVDLNAPTNLIEEFVRRANITREIWRYLIVNLDSEKGLNKKPKIRERNRKYTLRRDRFDKPNFRGNPKSRFDQQDQQATKNQQNFQQNQQNQASQYRENSRQNQDDFQQVSSNQQNFGQNQQNQSGYHRENNRHNQENMHQNNKNHQNQTSQTQRNRRQYQPIKNPKFNQKEKENYNNKKPQSSN.

The segment covering 97–108 (KPKIRERNRKYT) has biased composition (basic residues). The segment at 97-241 (KPKIRERNRK…YNNKKPQSSN (145 aa)) is disordered. Basic and acidic residues predominate over residues 109–118 (LRRDRFDKPN). Composition is skewed to low complexity over residues 130 to 151 (QDQQ…QASQ) and 161 to 182 (DDFQ…NQSG). Over residues 183–193 (YHRENNRHNQE) the composition is skewed to basic and acidic residues. Over residues 194–210 (NMHQNNKNHQNQTSQTQ) the composition is skewed to low complexity.

This sequence belongs to the bacterial ribosomal protein bS6 family.

Functionally, binds together with bS18 to 16S ribosomal RNA. In Mesomycoplasma hyopneumoniae (strain J / ATCC 25934 / NCTC 10110) (Mycoplasma hyopneumoniae), this protein is Small ribosomal subunit protein bS6.